A 510-amino-acid polypeptide reads, in one-letter code: Probable cytochrome P450 517A2 (510 aa).

The chain crosses the membrane as a helical span at residues 1 to 21 (MRILIIIILIIIVFLVKDTIK). Cys450 contacts heme.

The protein belongs to the cytochrome P450 family. Requires heme as cofactor.

The protein resides in the membrane. The sequence is that of Probable cytochrome P450 517A2 (cyp517A2) from Dictyostelium discoideum (Social amoeba).